The following is a 342-amino-acid chain: uncharacterized protein (342 aa).

It belongs to the cycloisomerase 2 family.

This is an uncharacterized protein from Staphylococcus epidermidis (strain ATCC 12228 / FDA PCI 1200).